We begin with the raw amino-acid sequence, 421 residues long: 2',3'-cyclic-nucleotide 3'-phosphodiesterase (421 aa).

Residues S6 and S9 each carry the phosphoserine modification. Position 110 is a phosphotyrosine (Y110). The residue at position 170 (S170) is a Phosphoserine. The active-site Proton acceptor is the H251. T253 is a binding site for substrate. H330 serves as the catalytic Proton donor. T332 is a substrate binding site. S359 is modified (phosphoserine). C418 is subject to Cysteine methyl ester. A lipid anchor (S-farnesyl cysteine) is attached at C418. Positions 419–421 (TII) are cleaved as a propeptide — removed in mature form.

This sequence belongs to the 2H phosphoesterase superfamily. CNPase family. Exists as monomers and homodimers.

Its subcellular location is the membrane. It localises to the melanosome. It catalyses the reaction a nucleoside 2',3'-cyclic phosphate + H2O = a nucleoside 2'-phosphate + H(+). Functionally, catalyzes the formation of 2'-nucleotide products from 2',3'-cyclic substrates. May participate in RNA metabolism in the myelinating cell, CNP is the third most abundant protein in central nervous system myelin. In Pongo abelii (Sumatran orangutan), this protein is 2',3'-cyclic-nucleotide 3'-phosphodiesterase.